Reading from the N-terminus, the 182-residue chain is NAD(P)H-quinone oxidoreductase subunit I, chloroplastic (182 aa).

4Fe-4S ferredoxin-type domains lie at 55–84 (GRIHFEFDKCIACEVCVRVCPIDLPVVDWK) and 95–124 (LNYSIDFGICIFCGNCVEYCPTNCLSMTEE). Residues C64, C67, C70, C74, C104, C107, C110, and C114 each coordinate [4Fe-4S] cluster.

The protein belongs to the complex I 23 kDa subunit family. NDH is composed of at least 16 different subunits, 5 of which are encoded in the nucleus. It depends on [4Fe-4S] cluster as a cofactor.

The protein resides in the plastid. Its subcellular location is the chloroplast thylakoid membrane. It catalyses the reaction a plastoquinone + NADH + (n+1) H(+)(in) = a plastoquinol + NAD(+) + n H(+)(out). The enzyme catalyses a plastoquinone + NADPH + (n+1) H(+)(in) = a plastoquinol + NADP(+) + n H(+)(out). In terms of biological role, NDH shuttles electrons from NAD(P)H:plastoquinone, via FMN and iron-sulfur (Fe-S) centers, to quinones in the photosynthetic chain and possibly in a chloroplast respiratory chain. The immediate electron acceptor for the enzyme in this species is believed to be plastoquinone. Couples the redox reaction to proton translocation, and thus conserves the redox energy in a proton gradient. This chain is NAD(P)H-quinone oxidoreductase subunit I, chloroplastic, found in Buxus microphylla (Littleleaf boxwood).